Reading from the N-terminus, the 190-residue chain is B3 domain-containing protein At1g49475 (190 aa).

Positions 1–27 (MRNMHTNRRSPGPITSAATQRRLKPEP) are disordered. The segment at residues 33–125 (KFIKIILLSR…CFRVVIFDVS (93 aa)) is a DNA-binding region (TF-B3).

Its subcellular location is the nucleus. The sequence is that of B3 domain-containing protein At1g49475 from Arabidopsis thaliana (Mouse-ear cress).